A 173-amino-acid polypeptide reads, in one-letter code: Small ribosomal subunit protein uS5 (173 aa).

One can recognise an S5 DRBM domain in the interval 18 to 81; it reads LREKMIAVNR…EQARRGMFKV (64 aa).

The protein belongs to the universal ribosomal protein uS5 family. As to quaternary structure, part of the 30S ribosomal subunit. Contacts proteins S4 and S8.

Its function is as follows. With S4 and S12 plays an important role in translational accuracy. Functionally, located at the back of the 30S subunit body where it stabilizes the conformation of the head with respect to the body. The sequence is that of Small ribosomal subunit protein uS5 from Bordetella petrii (strain ATCC BAA-461 / DSM 12804 / CCUG 43448).